We begin with the raw amino-acid sequence, 222 residues long: NADH dehydrogenase [ubiquinone] iron-sulfur protein 8-A, mitochondrial (222 aa).

2 consecutive 4Fe-4S ferredoxin-type domains span residues 114-143 (RRYP…IEAE) and 153-182 (TRYD…EGPN). [4Fe-4S] cluster-binding residues include cysteine 123, cysteine 126, cysteine 129, cysteine 133, cysteine 162, cysteine 165, cysteine 168, and cysteine 172.

It belongs to the complex I 23 kDa subunit family. As to quaternary structure, complex I is composed of at least 49 different subunits. This is a component of the iron-sulfur (IP) fragment of the enzyme. [4Fe-4S] cluster is required as a cofactor.

Its subcellular location is the mitochondrion. The enzyme catalyses a ubiquinone + NADH + 5 H(+)(in) = a ubiquinol + NAD(+) + 4 H(+)(out). Its function is as follows. Core subunit of the mitochondrial membrane respiratory chain NADH dehydrogenase (Complex I) that is believed to belong to the minimal assembly required for catalysis. Complex I functions in the transfer of electrons from NADH to the respiratory chain. The immediate electron acceptor for the enzyme is believed to be ubiquinone. May donate electrons to ubiquinone. The protein is NADH dehydrogenase [ubiquinone] iron-sulfur protein 8-A, mitochondrial of Arabidopsis thaliana (Mouse-ear cress).